The chain runs to 421 residues: Gamma-glutamyl phosphate reductase (421 aa).

Belongs to the gamma-glutamyl phosphate reductase family.

It localises to the cytoplasm. The enzyme catalyses L-glutamate 5-semialdehyde + phosphate + NADP(+) = L-glutamyl 5-phosphate + NADPH + H(+). It participates in amino-acid biosynthesis; L-proline biosynthesis; L-glutamate 5-semialdehyde from L-glutamate: step 2/2. Functionally, catalyzes the NADPH-dependent reduction of L-glutamate 5-phosphate into L-glutamate 5-semialdehyde and phosphate. The product spontaneously undergoes cyclization to form 1-pyrroline-5-carboxylate. The polypeptide is Gamma-glutamyl phosphate reductase (Brucella abortus (strain 2308)).